Consider the following 250-residue polypeptide: Peroxiredoxin (250 aa).

A Thioredoxin domain is found at 6–163; that stretch reads PLIGERFPEM…ILRIVKALKL (158 aa). C50 serves as the catalytic Cysteine sulfenic acid (-SOH) intermediate. Substrate is bound at residue R126. A disulfide bridge connects residues C207 and C213.

Belongs to the peroxiredoxin family. Prx6 subfamily. Homodecamer. Pentamer of dimers that assemble into a ring structure.

It localises to the cytoplasm. The catalysed reaction is a hydroperoxide + [thioredoxin]-dithiol = an alcohol + [thioredoxin]-disulfide + H2O. Its function is as follows. Thiol-specific peroxidase that catalyzes the reduction of hydrogen peroxide and organic hydroperoxides to water and alcohols, respectively. Plays a role in cell protection against oxidative stress by detoxifying peroxides. The chain is Peroxiredoxin from Aeropyrum pernix (strain ATCC 700893 / DSM 11879 / JCM 9820 / NBRC 100138 / K1).